A 227-amino-acid polypeptide reads, in one-letter code: Cytochrome c oxidase subunit 2 (227 aa).

Over 1–14 the chain is Mitochondrial intermembrane; the sequence is MAYPFQLGLQDATS. The helical transmembrane segment at 15 to 45 threads the bilayer; that stretch reads PIMEELTNFHDHTLMIVFLISSLVLYIISLM. Topologically, residues 46–59 are mitochondrial matrix; it reads LTTKLTHTSTMDAQ. Residues 60–87 form a helical membrane-spanning segment; it reads EVETIWTILPAAILILIALPSLRILYMM. At 88 to 227 the chain is on the mitochondrial intermembrane side; that stretch reads DEINNPVLTV…YFENWSTSMI (140 aa). Residues His161, Cys196, Glu198, Cys200, His204, and Met207 each contribute to the Cu cation site. Glu198 contacts Mg(2+). Tyr218 is subject to Phosphotyrosine.

This sequence belongs to the cytochrome c oxidase subunit 2 family. Component of the cytochrome c oxidase (complex IV, CIV), a multisubunit enzyme composed of 14 subunits. The complex is composed of a catalytic core of 3 subunits MT-CO1, MT-CO2 and MT-CO3, encoded in the mitochondrial DNA, and 11 supernumerary subunits COX4I, COX5A, COX5B, COX6A, COX6B, COX6C, COX7A, COX7B, COX7C, COX8 and NDUFA4, which are encoded in the nuclear genome. The complex exists as a monomer or a dimer and forms supercomplexes (SCs) in the inner mitochondrial membrane with NADH-ubiquinone oxidoreductase (complex I, CI) and ubiquinol-cytochrome c oxidoreductase (cytochrome b-c1 complex, complex III, CIII), resulting in different assemblies (supercomplex SCI(1)III(2)IV(1) and megacomplex MCI(2)III(2)IV(2)). Found in a complex with TMEM177, COA6, COX18, COX20, SCO1 and SCO2. Interacts with TMEM177 in a COX20-dependent manner. Interacts with COX20. Interacts with COX16. Cu cation is required as a cofactor.

The protein resides in the mitochondrion inner membrane. The enzyme catalyses 4 Fe(II)-[cytochrome c] + O2 + 8 H(+)(in) = 4 Fe(III)-[cytochrome c] + 2 H2O + 4 H(+)(out). Component of the cytochrome c oxidase, the last enzyme in the mitochondrial electron transport chain which drives oxidative phosphorylation. The respiratory chain contains 3 multisubunit complexes succinate dehydrogenase (complex II, CII), ubiquinol-cytochrome c oxidoreductase (cytochrome b-c1 complex, complex III, CIII) and cytochrome c oxidase (complex IV, CIV), that cooperate to transfer electrons derived from NADH and succinate to molecular oxygen, creating an electrochemical gradient over the inner membrane that drives transmembrane transport and the ATP synthase. Cytochrome c oxidase is the component of the respiratory chain that catalyzes the reduction of oxygen to water. Electrons originating from reduced cytochrome c in the intermembrane space (IMS) are transferred via the dinuclear copper A center (CU(A)) of subunit 2 and heme A of subunit 1 to the active site in subunit 1, a binuclear center (BNC) formed by heme A3 and copper B (CU(B)). The BNC reduces molecular oxygen to 2 water molecules using 4 electrons from cytochrome c in the IMS and 4 protons from the mitochondrial matrix. In Arvicanthis somalicus (Neumann's grass rat), this protein is Cytochrome c oxidase subunit 2 (MT-CO2).